We begin with the raw amino-acid sequence, 600 residues long: Elongation factor 4 (600 aa).

One can recognise a tr-type G domain in the interval 4 to 186 (KNVRNFCIIA…AIVNRIPPPK (183 aa)). GTP-binding positions include 16–21 (DHGKST) and 133–136 (NKID).

It belongs to the TRAFAC class translation factor GTPase superfamily. Classic translation factor GTPase family. LepA subfamily.

The protein resides in the cell inner membrane. It carries out the reaction GTP + H2O = GDP + phosphate + H(+). Functionally, required for accurate and efficient protein synthesis under certain stress conditions. May act as a fidelity factor of the translation reaction, by catalyzing a one-codon backward translocation of tRNAs on improperly translocated ribosomes. Back-translocation proceeds from a post-translocation (POST) complex to a pre-translocation (PRE) complex, thus giving elongation factor G a second chance to translocate the tRNAs correctly. Binds to ribosomes in a GTP-dependent manner. The protein is Elongation factor 4 of Aquifex aeolicus (strain VF5).